A 327-amino-acid chain; its full sequence is Tetraacyldisaccharide 4'-kinase (327 aa).

56–63 (FVGGTGKT) contacts ATP.

This sequence belongs to the LpxK family.

It carries out the reaction a lipid A disaccharide + ATP = a lipid IVA + ADP + H(+). Its pathway is glycolipid biosynthesis; lipid IV(A) biosynthesis; lipid IV(A) from (3R)-3-hydroxytetradecanoyl-[acyl-carrier-protein] and UDP-N-acetyl-alpha-D-glucosamine: step 6/6. In terms of biological role, transfers the gamma-phosphate of ATP to the 4'-position of a tetraacyldisaccharide 1-phosphate intermediate (termed DS-1-P) to form tetraacyldisaccharide 1,4'-bis-phosphate (lipid IVA). The polypeptide is Tetraacyldisaccharide 4'-kinase (Halorhodospira halophila (strain DSM 244 / SL1) (Ectothiorhodospira halophila (strain DSM 244 / SL1))).